We begin with the raw amino-acid sequence, 551 residues long: Eukaryotic translation initiation factor 3 subunit D-2 (551 aa).

Residues T91–F154 form a disordered region. Over residues Q95–T113 the composition is skewed to basic residues. Over residues A121–T136 the composition is skewed to low complexity. Residues Q290–P304 form an RNA gate region. The segment at P527–N551 is disordered. Residues F531–S542 show a composition bias toward acidic residues.

The protein belongs to the eIF-3 subunit D family. Component of the eukaryotic translation initiation factor 3 (eIF-3) complex. The eIF-3 complex interacts with pix.

It is found in the cytoplasm. MRNA cap-binding component of the eukaryotic translation initiation factor 3 (eIF-3) complex, which is involved in protein synthesis of a specialized repertoire of mRNAs and, together with other initiation factors, stimulates binding of mRNA and methionyl-tRNAi to the 40S ribosome. The eIF-3 complex specifically targets and initiates translation of a subset of mRNAs involved in cell proliferation. In the eIF-3 complex, eif3d specifically recognizes and binds the 7-methylguanosine cap of a subset of mRNAs. The sequence is that of Eukaryotic translation initiation factor 3 subunit D-2 from Drosophila melanogaster (Fruit fly).